Reading from the N-terminus, the 152-residue chain is Cytochrome c-type biogenesis CcmH-like mitochondrial protein (152 aa).

The Mitochondrial intermembrane segment spans residues 1-83 (MATEEDVKQR…ILYTPKFDLQ (83 aa)). The heme site is built by Cys-26 and Cys-29. The helical transmembrane segment at 84-104 (TAAIWLSPVIVGGVAAGVWAY) threads the bilayer. Over 105 to 152 (QKHRQRTNVHIMALNLVRGVPLTPREKETMLDVLTPPPPANKWWWPGK) the chain is Mitochondrial matrix.

This sequence belongs to the CcmH/CycL/Ccl2/NrfF family.

It is found in the mitochondrion inner membrane. In terms of biological role, plays a role in mitochondrial cytochrome c maturation. Probable component of a heme lyase complex involved in the reduction of apocytochrome c. The sequence is that of Cytochrome c-type biogenesis CcmH-like mitochondrial protein from Oryza sativa subsp. japonica (Rice).